The chain runs to 440 residues: RUN domain-containing protein 3A (440 aa).

The RUN domain maps to 52–184 (DDSSEEFVNF…IDFSFCLKGE (133 aa)). The disordered stretch occupies residues 213 to 233 (DDRESVGGSSSEDSSPEHPYL). A coiled-coil region spans residues 262-317 (YLEELVRLRETQLKNLEAENKRLTQRISEQAEQSLQEKHQLEGVILELQEQLTGLL). Positions 374–402 (LSSESQRLDGKQDGEPWGPIGKDPTPSML) are disordered.

Belongs to the RUNDC3 family.

The sequence is that of RUN domain-containing protein 3A (rundc3a) from Xenopus tropicalis (Western clawed frog).